The chain runs to 926 residues: Protein translocase subunit SecA (926 aa).

Residues glutamine 87, 105 to 109, and aspartate 512 each bind ATP; that span reads GEGKT. Cysteine 911, cysteine 913, cysteine 922, and histidine 923 together coordinate Zn(2+).

This sequence belongs to the SecA family. Monomer and homodimer. Part of the essential Sec protein translocation apparatus which comprises SecA, SecYEG and auxiliary proteins SecDF-YajC and YidC. The cofactor is Zn(2+).

It localises to the cell inner membrane. It is found in the cytoplasm. The catalysed reaction is ATP + H2O + cellular proteinSide 1 = ADP + phosphate + cellular proteinSide 2.. Functionally, part of the Sec protein translocase complex. Interacts with the SecYEG preprotein conducting channel. Has a central role in coupling the hydrolysis of ATP to the transfer of proteins into and across the cell membrane, serving both as a receptor for the preprotein-SecB complex and as an ATP-driven molecular motor driving the stepwise translocation of polypeptide chains across the membrane. This chain is Protein translocase subunit SecA, found in Psychrobacter cryohalolentis (strain ATCC BAA-1226 / DSM 17306 / VKM B-2378 / K5).